A 638-amino-acid chain; its full sequence is MKKTFYITTPIYYPSDKLHIGHSYTTVAADAMARFKRLTGYDVMFLTGTDEHGQKIQRIAREKGMSPKEYVDGIVEWIKDLWKTMDISYDHFIRTTDAYHEEIVQKIFMKLYEQGDIYKGEYEGWYCTPCESFWTESQLVDGKCPDCGRPVERVTEEGYFFRLSAYGDKLLKYYEEHPDFIQPESRRNEMINFIKAGLEDLFVSRSTFDWGIKVPFDPKHVIYVWIDALSNYITALGYMTENDEKFKKYWPADVHLVGKEIVRFHTIIWPAMLMALGLPLPKKVFGHGWLILEGGKMSKSKGNVVDPKELVDRYGVDAIRYFLLREVPFGADGVFSNEALINRINSDLANDLGNLLSRTVTMIEKYFDGVLPKPSSQEEIDEDLINVAQNLPQKVEEYMDKLQFSNALIEIWKLVSRANKYIDETMPWVLAKDESKRGRLGTVLYNLAESLRFIGILISPFMPNTPKKMFEQLGITEDLTTWESLKFGLLKEGTRVKRGEILFPRIDVEKELASLEKKTEEKTKETKEEKIDYITIEDFSKVQLRVAEILEAEKVEGSDKLIKMKLKVGEEIRQIVGGIGKYYSPEELIGKKIIIVYNLQPRKLMGIESQGMLLAATNEGKMALLTVDKDIESGSKIS.

The 'HIGH' region signature appears at Y12–H22. 4 residues coordinate Zn(2+): C127, C130, C144, and C147. Residues K296–S300 carry the 'KMSKS' region motif. K299 is an ATP binding site. Residues D538–S638 form the tRNA-binding domain.

This sequence belongs to the class-I aminoacyl-tRNA synthetase family. MetG type 2A subfamily. As to quaternary structure, homodimer. It depends on Zn(2+) as a cofactor.

The protein localises to the cytoplasm. The enzyme catalyses tRNA(Met) + L-methionine + ATP = L-methionyl-tRNA(Met) + AMP + diphosphate. Its function is as follows. Is required not only for elongation of protein synthesis but also for the initiation of all mRNA translation through initiator tRNA(fMet) aminoacylation. This Caldanaerobacter subterraneus subsp. tengcongensis (strain DSM 15242 / JCM 11007 / NBRC 100824 / MB4) (Thermoanaerobacter tengcongensis) protein is Methionine--tRNA ligase (metG).